The primary structure comprises 884 residues: Schlafen family member 5 (884 aa).

574–581 (GLPGSGKT) contributes to the ATP binding site.

Belongs to the Schlafen family. Subgroup III subfamily.

May have a role in hematopoietic cell differentiation. The polypeptide is Schlafen family member 5 (Slfn5) (Mus musculus (Mouse)).